The following is a 118-amino-acid chain: Large ribosomal subunit protein bL20 (118 aa).

This sequence belongs to the bacterial ribosomal protein bL20 family.

Its function is as follows. Binds directly to 23S ribosomal RNA and is necessary for the in vitro assembly process of the 50S ribosomal subunit. It is not involved in the protein synthesizing functions of that subunit. This is Large ribosomal subunit protein bL20 from Psychrobacter sp. (strain PRwf-1).